Consider the following 172-residue polypeptide: ATP synthase subunit b (172 aa).

Residues 13-33 (GINGGDILFQLVMFLILLALL) traverse the membrane as a helical segment.

The protein belongs to the ATPase B chain family. As to quaternary structure, F-type ATPases have 2 components, F(1) - the catalytic core - and F(0) - the membrane proton channel. F(1) has five subunits: alpha(3), beta(3), gamma(1), delta(1), epsilon(1). F(0) has three main subunits: a(1), b(2) and c(10-14). The alpha and beta chains form an alternating ring which encloses part of the gamma chain. F(1) is attached to F(0) by a central stalk formed by the gamma and epsilon chains, while a peripheral stalk is formed by the delta and b chains.

Its subcellular location is the cell membrane. Its function is as follows. F(1)F(0) ATP synthase produces ATP from ADP in the presence of a proton or sodium gradient. F-type ATPases consist of two structural domains, F(1) containing the extramembraneous catalytic core and F(0) containing the membrane proton channel, linked together by a central stalk and a peripheral stalk. During catalysis, ATP synthesis in the catalytic domain of F(1) is coupled via a rotary mechanism of the central stalk subunits to proton translocation. Component of the F(0) channel, it forms part of the peripheral stalk, linking F(1) to F(0). The polypeptide is ATP synthase subunit b (Priestia megaterium (strain ATCC 12872 / QMB1551) (Bacillus megaterium)).